The chain runs to 1203 residues: Serine/threonine-protein kinase Nek1 (1203 aa).

In terms of domain architecture, Protein kinase spans 4–258 (YVRLQKIGEG…VNSILEKGFI (255 aa)). ATP is bound by residues 10–18 (IGEGSFGKA) and K33. D128 (proton acceptor) is an active-site residue. At T156 the chain carries Phosphothreonine. T162 is modified (phosphothreonine; by autocatalysis). Positions 329–357 (LLEKKPPPKHKQAHQIPVKKMNSGEERKK) are disordered. 2 positions are modified to phosphoserine: S417 and S437. Residue T615 is modified to Phosphothreonine. S618 carries the phosphoserine modification. Disordered stretches follow at residues 643-662 (LTDT…SSKR) and 674-708 (AQED…ISSD). Basic and acidic residues predominate over residues 674 to 683 (AQEDEKEKQH). A phosphoserine mark is found at S750, S786, S820, and S832. Disordered stretches follow at residues 814-866 (PSAT…LPPV) and 888-925 (AVQQ…GCDV). The segment covering 839 to 850 (NVEEPDDLETEV) has biased composition (acidic residues). At S997 the chain carries Phosphoserine. Disordered stretches follow at residues 1021 to 1045 (SLEI…TVFE) and 1063 to 1120 (REQP…ETTS). S1071 carries the phosphoserine modification.

This sequence belongs to the protein kinase superfamily. NEK Ser/Thr protein kinase family. NIMA subfamily. Binds to CBY2. Found in a complex with CFAP410, NEK1 and SPATA7. Interacts with CFAP410. Interacts (via Ser-997 phosphorylated form) with 14-3-3 proteins. Mg(2+) serves as cofactor. Predominantly in testes (germ cells and Sertoli cells). Lower levels in ovary (oocytes and granulosa cells), thymus and lung.

It localises to the nucleus. The protein resides in the cytoplasm. It is found in the cytoskeleton. The protein localises to the microtubule organizing center. Its subcellular location is the centrosome. It catalyses the reaction L-seryl-[protein] + ATP = O-phospho-L-seryl-[protein] + ADP + H(+). The catalysed reaction is L-threonyl-[protein] + ATP = O-phospho-L-threonyl-[protein] + ADP + H(+). Phosphorylates serines and threonines, but also appears to possess tyrosine kinase activity. Involved in DNA damage checkpoint control and for proper DNA damage repair. In response to injury that includes DNA damage, NEK1 phosphorylates VDAC1 to limit mitochondrial cell death. May be implicated in the control of meiosis. Involved in cilium assembly. This chain is Serine/threonine-protein kinase Nek1 (Nek1), found in Mus musculus (Mouse).